The sequence spans 277 residues: S-formylglutathione hydrolase FrmB (277 aa).

Active-site charge relay system residues include Ser145, Asp221, and His254.

It belongs to the esterase D family.

The enzyme catalyses S-formylglutathione + H2O = formate + glutathione + H(+). Its function is as follows. Serine hydrolase involved in the detoxification of formaldehyde. Hydrolyzes S-formylglutathione to glutathione and formate. The sequence is that of S-formylglutathione hydrolase FrmB (frmB) from Escherichia coli O157:H7.